The chain runs to 214 residues: Redox-sensing transcriptional repressor Rex (214 aa).

Residues 17 to 56 (LYYRIFKRFYADQVEKASSKQIADAMGIDSATVRRDFSYF) constitute a DNA-binding region (H-T-H motif). 91–96 (GCGNIG) lines the NAD(+) pocket.

It belongs to the transcriptional regulatory Rex family. Homodimer.

Its subcellular location is the cytoplasm. Its function is as follows. Modulates transcription in response to changes in cellular NADH/NAD(+) redox state. This chain is Redox-sensing transcriptional repressor Rex, found in Streptococcus equi subsp. zooepidemicus (strain H70).